A 141-amino-acid chain; its full sequence is Hemoglobin subunit alpha-A (141 aa).

The region spanning 1–141 (VLSAADKNNV…VGTVLTAKYR (141 aa)) is the Globin domain. His58 serves as a coordination point for O2. His87 is a heme b binding site.

The protein belongs to the globin family. In terms of assembly, heterotetramer of two alpha chains and two beta chains. In terms of tissue distribution, red blood cells.

Involved in oxygen transport from the lung to the various peripheral tissues. This is Hemoglobin subunit alpha-A (HBAA) from Phasianus colchicus colchicus (Black-necked pheasant).